Here is a 257-residue protein sequence, read N- to C-terminus: MTTLVELQSVTVTFGDRHVLDQVSMKLERGQITTLIGPNGAGKSTLVKVITGLRKPSTGHVVRQKGIRIGYVPQKLQLNSTLPLTVDRFMRLAGRYDENARKEALSLVGGTHLHHSDMHSLSGGEMQRVLLARALLQKPDVLVLDEPVQGVDVNGQLELYNLIQSLRDILNCSILMVSHDLHLVMAKTDNVICLHHHICCSGEPDTITNHPSYVALFGQQQSEQLALYHHHHNHEHDLAGSPVGPCQHNKQHGHDNA.

Positions 5-220 constitute an ABC transporter domain; that stretch reads VELQSVTVTF…PSYVALFGQQ (216 aa). 37–44 lines the ATP pocket; that stretch reads GPNGAGKS. The tract at residues 234–257 is disordered; it reads HEHDLAGSPVGPCQHNKQHGHDNA.

The protein belongs to the ABC transporter superfamily. Zinc importer (TC 3.A.1.15.5) family. As to quaternary structure, the complex is composed of two ATP-binding proteins (ZnuC), two transmembrane proteins (ZnuB) and a solute-binding protein (ZnuA).

The protein resides in the cell inner membrane. The enzyme catalyses Zn(2+)(out) + ATP(in) + H2O(in) = Zn(2+)(in) + ADP(in) + phosphate(in) + H(+)(in). Functionally, part of the ABC transporter complex ZnuABC involved in zinc import. Responsible for energy coupling to the transport system. This is Zinc import ATP-binding protein ZnuC from Photobacterium profundum (strain SS9).